The chain runs to 428 residues: Enolase (428 aa).

(2R)-2-phosphoglycerate is bound at residue glutamine 163. Glutamate 205 acts as the Proton donor in catalysis. Positions 242, 285, and 312 each coordinate Mg(2+). (2R)-2-phosphoglycerate contacts are provided by lysine 337, arginine 366, serine 367, and lysine 388. The active-site Proton acceptor is lysine 337.

Belongs to the enolase family. Mg(2+) is required as a cofactor.

It is found in the cytoplasm. It localises to the secreted. Its subcellular location is the cell surface. The enzyme catalyses (2R)-2-phosphoglycerate = phosphoenolpyruvate + H2O. The protein operates within carbohydrate degradation; glycolysis; pyruvate from D-glyceraldehyde 3-phosphate: step 4/5. Catalyzes the reversible conversion of 2-phosphoglycerate (2-PG) into phosphoenolpyruvate (PEP). It is essential for the degradation of carbohydrates via glycolysis. The protein is Enolase of Erythrobacter litoralis (strain HTCC2594).